The following is a 99-amino-acid chain: Large ribosomal subunit protein bL21 (99 aa).

It belongs to the bacterial ribosomal protein bL21 family. Part of the 50S ribosomal subunit. Contacts protein L20.

Functionally, this protein binds to 23S rRNA in the presence of protein L20. The polypeptide is Large ribosomal subunit protein bL21 (Deinococcus geothermalis (strain DSM 11300 / CIP 105573 / AG-3a)).